A 156-amino-acid chain; its full sequence is Transcription antitermination protein NusB (156 aa).

It belongs to the NusB family.

Functionally, involved in transcription antitermination. Required for transcription of ribosomal RNA (rRNA) genes. Binds specifically to the boxA antiterminator sequence of the ribosomal RNA (rrn) operons. In Rickettsia rickettsii (strain Iowa), this protein is Transcription antitermination protein NusB.